The primary structure comprises 387 residues: Oxidase FUB9 (387 aa).

The tract at residues 1-20 (MSRTNLPIQPAKMSDATSSK) is disordered. Residues 18 to 379 (SSKPQIFSIQ…TPAHLSILNA (362 aa)) form the FMN hydroxy acid dehydrogenase domain. Residue tyrosine 44 coordinates a 2-oxocarboxylate. The FMN site is built by serine 126, glutamine 150, and threonine 178. Residue arginine 187 coordinates a 2-oxocarboxylate. Lysine 250 contributes to the FMN binding site. The active-site Proton acceptor is histidine 274. Arginine 277 contacts a 2-oxocarboxylate. Residues 305 to 309 (DGGFR) and 328 to 329 (GR) contribute to the FMN site.

It belongs to the FMN-dependent alpha-hydroxy acid dehydrogenase family. It depends on FMN as a cofactor.

The protein operates within mycotoxin biosynthesis. Functionally, oxidase; part of the gene cluster that mediates the biosynthesis of fusaric acid, a mycotoxin with low to moderate toxicity to animals and humans, but with high phytotoxic properties. L-aspartate is suggested as fusaric acid amino acid precursor that is activated and further processed to O-acetyl-L-homoserine by cluster enzymes aspartate kinase FUB3 and homoserine O-acetyltransferase FUB5, as well as enzymes of the primary metabolism. The polyketide synthase (PKS) FUB1 generates the triketide trans-2-hexenal which is presumptively released by the hydrolase FUB4 and linked to the NRPS-bound amino acid precursor by NAD(P)-dependent dehydrogenase FUB6. FUB1, FUB4, and the non-canonical NRPS Fub8 may form an enzyme complex. Further processing of the NRPS-bound intermediate might be carried out by FUB6 and the sulfhydrylase FUB7, enabling a spontaneous electrocyclization to close the carbon backbone of fusaric acid. Dihydrofusaric acid is likely to be released via reduction by the thioester reductase (TR) domain of FUB8 whereupon the final oxidation to fusaric acid may (also) be performed by the FMN-dependent dehydrogenase FUB9. The sequence is that of Oxidase FUB9 from Fusarium oxysporum f. sp. lycopersici (strain 4287 / CBS 123668 / FGSC 9935 / NRRL 34936) (Fusarium vascular wilt of tomato).